Reading from the N-terminus, the 681-residue chain is Macrolide export ATP-binding/permease protein MacB (681 aa).

Residues 6 to 244 (LKLAAVTRRF…FAEVGVGAAA (239 aa)) form the ABC transporter domain. An ATP-binding site is contributed by 42-49 (GASGSGKS). The tract at residues 246–274 (TETAADTRSAPASGDAPPPANNDTAADPA) is disordered. 4 helical membrane-spanning segments follow: residues 306-326 (LLTM…VAVG), 554-574 (LTLL…IGVM), 611-631 (LVCL…GALF), and 644-664 (AGAI…FGFM).

The protein belongs to the ABC transporter superfamily. Macrolide exporter (TC 3.A.1.122) family. In terms of assembly, homodimer.

The protein resides in the cell inner membrane. Functionally, non-canonical ABC transporter that contains transmembrane domains (TMD), which form a pore in the inner membrane, and an ATP-binding domain (NBD), which is responsible for energy generation. Confers resistance against macrolides. This is Macrolide export ATP-binding/permease protein MacB from Burkholderia cenocepacia (strain HI2424).